The sequence spans 258 residues: MAIELYSQREIEKIRKASQIVAEVLHIVAENVKPGVSTWDLEMIARKETEKRGAKPAFLGYKPPFSDVRYPAALCISINDEVVHGLPKKEKVIKEGDVVSIDFGAIYDGYAGDSAITVIAGKGSPEAQKLLEATKEALYNAIEKALPGKKVGDITKAIHETAEKYGFKTILRYGGHGVGRKVHQEPFVPNNVKDIGKKNPRLRQGMVIAIEPMLSIGTEETVEDGDGWTVKTKDGSLAAHFEHTVAITKKGPVILTEL.

H84 contacts substrate. Positions 102, 113, and 176 each coordinate a divalent metal cation. H183 provides a ligand contact to substrate. 2 residues coordinate a divalent metal cation: E211 and E242.

It belongs to the peptidase M24A family. Methionine aminopeptidase type 1 subfamily. Monomer. The cofactor is Co(2+). Zn(2+) serves as cofactor. It depends on Mn(2+) as a cofactor. Requires Fe(2+) as cofactor.

It catalyses the reaction Release of N-terminal amino acids, preferentially methionine, from peptides and arylamides.. Functionally, removes the N-terminal methionine from nascent proteins. The N-terminal methionine is often cleaved when the second residue in the primary sequence is small and uncharged (Met-Ala-, Cys, Gly, Pro, Ser, Thr, or Val). Requires deformylation of the N(alpha)-formylated initiator methionine before it can be hydrolyzed. The polypeptide is Methionine aminopeptidase (Aquifex aeolicus (strain VF5)).